The primary structure comprises 320 residues: Malate dehydrogenase (320 aa).

NAD(+) is bound by residues 10 to 15 (GSGMIG) and D34. Substrate is bound by residues R83 and R89. NAD(+) contacts are provided by residues N96 and 119–121 (ITN). Residues N121 and R152 each contribute to the substrate site. H176 serves as the catalytic Proton acceptor.

Belongs to the LDH/MDH superfamily. MDH type 3 family.

It carries out the reaction (S)-malate + NAD(+) = oxaloacetate + NADH + H(+). Catalyzes the reversible oxidation of malate to oxaloacetate. In Rhizobium rhizogenes (strain K84 / ATCC BAA-868) (Agrobacterium radiobacter), this protein is Malate dehydrogenase.